Consider the following 93-residue polypeptide: Aspartyl/glutamyl-tRNA(Asn/Gln) amidotransferase subunit C (93 aa).

The protein belongs to the GatC family. In terms of assembly, heterotrimer of A, B and C subunits.

It catalyses the reaction L-glutamyl-tRNA(Gln) + L-glutamine + ATP + H2O = L-glutaminyl-tRNA(Gln) + L-glutamate + ADP + phosphate + H(+). The catalysed reaction is L-aspartyl-tRNA(Asn) + L-glutamine + ATP + H2O = L-asparaginyl-tRNA(Asn) + L-glutamate + ADP + phosphate + 2 H(+). Functionally, allows the formation of correctly charged Asn-tRNA(Asn) or Gln-tRNA(Gln) through the transamidation of misacylated Asp-tRNA(Asn) or Glu-tRNA(Gln) in organisms which lack either or both of asparaginyl-tRNA or glutaminyl-tRNA synthetases. The reaction takes place in the presence of glutamine and ATP through an activated phospho-Asp-tRNA(Asn) or phospho-Glu-tRNA(Gln). The polypeptide is Aspartyl/glutamyl-tRNA(Asn/Gln) amidotransferase subunit C (Methanothrix thermoacetophila (strain DSM 6194 / JCM 14653 / NBRC 101360 / PT) (Methanosaeta thermophila)).